The chain runs to 70 residues: Small ribosomal subunit protein bS21 (70 aa).

The protein belongs to the bacterial ribosomal protein bS21 family.

This chain is Small ribosomal subunit protein bS21, found in Campylobacter hominis (strain ATCC BAA-381 / DSM 21671 / CCUG 45161 / LMG 19568 / NCTC 13146 / CH001A).